A 63-amino-acid chain; its full sequence is Cecropin-B (63 aa).

An N-terminal signal peptide occupies residues 1–22; sequence MNFNKIFVFVALILAISLGNTE. Arg-62 bears the Arginine amide mark.

This sequence belongs to the cecropin family.

Its subcellular location is the secreted. Cecropins have lytic and antibacterial activity against several Gram-positive and Gram-negative bacteria. The chain is Cecropin-B (CecB) from Drosophila simulans (Fruit fly).